The sequence spans 387 residues: Protochlorophyllide reductase A, chloroplastic (387 aa).

A chloroplast-targeting transit peptide spans 1–35 (MALQVQAALLPSALSVPKKGNLSAVVKEPGFLSVS).

The protein belongs to the short-chain dehydrogenases/reductases (SDR) family. POR subfamily.

It is found in the plastid. It localises to the chloroplast. The catalysed reaction is chlorophyllide a + NADP(+) = protochlorophyllide a + NADPH + H(+). Its pathway is porphyrin-containing compound metabolism; chlorophyll biosynthesis. In terms of biological role, phototransformation of protochlorophyllide (Pchlide) to chlorophyllide (Chlide). The polypeptide is Protochlorophyllide reductase A, chloroplastic (PORA) (Oryza sativa subsp. japonica (Rice)).